The primary structure comprises 30 residues: Large ribosomal subunit protein bL25 (30 aa).

The protein belongs to the bacterial ribosomal protein bL25 family. In terms of assembly, part of the 50S ribosomal subunit; part of the 5S rRNA/L5/L18/L25 subcomplex. Contacts the 5S rRNA. Binds to the 5S rRNA independently of L5 and L18.

This is one of the proteins that binds to the 5S RNA in the ribosome where it forms part of the central protuberance. The sequence is that of Large ribosomal subunit protein bL25 (rplY) from Anabaena variabilis.